Consider the following 392-residue polypeptide: VHSVVDYVSAAEYQVYPWGINDPTEGNRTTLHLPWLKTLSTDWHIDGKGWYSTTRGNNAIAQENPTGGPEYENNYRPKSPLFIFKYPYSKAMTPPSSYRDASITQLFYTTNVYHDVLYILGFNEKAGNFQINNWNKGGVGGDYAILNSQDGSGVNNANFATPPDGQPGRMRMYTWNASIPERDGCFEAGIVIHEYTHGVSNRLTGGPENSRCLAALESGGMGEGWSDFFATAIRLKPGDTRATDYTMGEWASNRPNGIRKYRYSTSLTTNPHMYVDADGLTSVHAIGNIWASMLYELLWNLIDKHGKGDVTKIRPVLKNGVPTDGRHLAMKIVLDGMALQPCLPNFVQARDAILDADKNLTQGSNKCEIWKAFAKRGLGVGAVFNLSKRTGS.

Positions 1 to 9 are excised as a propeptide; the sequence is VHSVVDYVS. N-linked (GlcNAc...) asparagine glycosylation is found at Asn-27 and Asn-176. A Zn(2+)-binding site is contributed by His-193. The active site involves Glu-194. His-197 provides a ligand contact to Zn(2+). Asn-359 and Asn-385 each carry an N-linked (GlcNAc...) asparagine glycan.

Belongs to the peptidase M36 family. The cofactor is Zn(2+).

The protein resides in the secreted. Secreted metalloproteinase probably acting as a virulence factor. This Trichophyton violaceum protein is Extracellular metalloproteinase 4 (MEP4).